The chain runs to 238 residues: Small ribosomal subunit protein uS2 (238 aa).

It belongs to the universal ribosomal protein uS2 family.

In Actinobacillus pleuropneumoniae serotype 7 (strain AP76), this protein is Small ribosomal subunit protein uS2.